We begin with the raw amino-acid sequence, 527 residues long: ATP synthase subunit alpha (527 aa).

172–179 (GDRQTGKT) serves as a coordination point for ATP.

The protein belongs to the ATPase alpha/beta chains family. In terms of assembly, F-type ATPases have 2 components, CF(1) - the catalytic core - and CF(0) - the membrane proton channel. CF(1) has five subunits: alpha(3), beta(3), gamma(1), delta(1), epsilon(1). CF(0) has three main subunits: a(1), b(2) and c(9-12). The alpha and beta chains form an alternating ring which encloses part of the gamma chain. CF(1) is attached to CF(0) by a central stalk formed by the gamma and epsilon chains, while a peripheral stalk is formed by the delta and b chains.

It is found in the cell inner membrane. The catalysed reaction is ATP + H2O + 4 H(+)(in) = ADP + phosphate + 5 H(+)(out). Produces ATP from ADP in the presence of a proton gradient across the membrane. The alpha chain is a regulatory subunit. This is ATP synthase subunit alpha from Bacteroides thetaiotaomicron (strain ATCC 29148 / DSM 2079 / JCM 5827 / CCUG 10774 / NCTC 10582 / VPI-5482 / E50).